The chain runs to 849 residues: MSDTRRRVKVYTLNEDRQWDDRGTGHVSSTYVEELKGMSLLVRAESDGSLLLESKINPNTAYQKQQDTLIVWSEAENYDLALSFQEKAGCDEIWEKICQVQGKDPSVEVTQDLIDESEEERFEEMPETSHLIDLPTCELNKLEEIADLVTSVLSSPIRREKLALALENEGYIKKLLQLFQACENLENTEGLHHLYEIIRGILFLNKATLFEVMFSDECIMDVVGCLEYDPALAQPKRHREFLTKTAKFKEVIPITDSELRQKIHQTYRVQYIQDIILPTPSVFEENFLSTLTSFIFFNKVEIVSMLQEDEKFLSEVFAQLTDEATDDDKRRELVNFFKEFCAFSQTLQPQNRDAFFKTLAKLGILPALEIVMGMDDLQVRSAATDIFSYLVEFSPSMVREFVMQEAQQSDDDILLINVVIEQMICDTDPELGGAVQLMGLLRTLIDPENMLATTNKTEKSEFLNFFYNHCMHVLTAPLLTNTSEDKCEKDFFLKHYRYSWSFICTPSHSHSHSTPSSSISQDNIVGSNKNNTICPDNYQTAQLLALILELLTFCVEHHTYHIKNYIMNKDLLRRVLVLMNSKHTFLALCALRFMRRIIGLKDEFYNRYITKGNLFEPVINALLDNGTRYNLLNSAVIELFEFIRVEDIKSLTAHIVENFYKALESIEYVQTFKGLKTKYEQEKDRQNQKLNSVPSILRSNRFRRDAKALEEDEEMWFNEDEEEEGKAVVAPVEKPKPEDDFPDNYEKFMETKKAKESEDKENLPKRTSPGGFKFTFSHSASAANGTNSKSVVAQIPPATSNGSSSKTTNLPTSVTATKGSLVGLVDYPDDEEEDEEEESSPRKRPRLGS.

A WH1 domain is found at 1-100 (MSDTRRRVKV…DEIWEKICQV (100 aa)). 2 positions are modified to phosphoserine: Ser-117 and Ser-695. Residues 714–724 (EMWFNEDEEEE) show a composition bias toward acidic residues. Positions 714-849 (EMWFNEDEEE…SPRKRPRLGS (136 aa)) are disordered. The segment covering 733–764 (EKPKPEDDFPDNYEKFMETKKAKESEDKENLP) has biased composition (basic and acidic residues). A compositionally biased stretch (polar residues) spans 776 to 818 (FSHSASAANGTNSKSVVAQIPPATSNGSSSKTTNLPTSVTATK). Positions 827–838 (YPDDEEEDEEEE) are enriched in acidic residues. A Phosphoserine modification is found at Ser-840.

It belongs to the SMEK family. Serine/threonine-protein phosphatase 4 (PP4) occurs in different assemblies of the catalytic and one or more regulatory subunits. Component of the PP4 complex PPP4C-PPP4R2-PPP4R3B. As to expression, moderately expressed in tissues and specific brain regions examined.

The protein localises to the cytoplasm. It is found in the cytoskeleton. The protein resides in the microtubule organizing center. Its subcellular location is the centrosome. It localises to the nucleus. Regulatory subunit of serine/threonine-protein phosphatase 4 (PP4). May regulate the activity of PPP4C at centrosomal microtubule organizing centers. The sequence is that of Serine/threonine-protein phosphatase 4 regulatory subunit 3B from Homo sapiens (Human).